A 652-amino-acid polypeptide reads, in one-letter code: Chaperone protein HtpG (652 aa).

An a; substrate-binding region spans residues Met-1–Arg-348. The interval Glu-349–Arg-565 is b. Residues Leu-566–Asp-652 are c.

The protein belongs to the heat shock protein 90 family. Homodimer.

It localises to the cytoplasm. Its function is as follows. Molecular chaperone. Has ATPase activity. This chain is Chaperone protein HtpG, found in Alkalilimnicola ehrlichii (strain ATCC BAA-1101 / DSM 17681 / MLHE-1).